The primary structure comprises 332 residues: Super small secreted glycoprotein (332 aa).

The signal sequence occupies residues 1-33 (MGSGYQLLQLPRERFRKTSFLVWVIILFQRAIS). Residue Asn41 is glycosylated (N-linked (GlcNAc...) asparagine; by host). 2 disulfides stabilise this stretch: Cys109–Cys136 and Cys122–Cys148. Asn205, Asn239, Asn258, and Asn269 each carry an N-linked (GlcNAc...) asparagine; by host glycan.

Belongs to the filoviruses glycoprotein family.

It localises to the secreted. This is Super small secreted glycoprotein (GP) from Homo sapiens (Human).